Reading from the N-terminus, the 438-residue chain is Cyanidin-3-O-glucoside 2-O-glucuronosyltransferase (438 aa).

Residues Ser-264, 315 to 316 (WV), 333 to 341 (HCGWSSTME), and 355 to 358 (QFDQ) each bind UDP-alpha-D-glucuronate.

The protein belongs to the UDP-glycosyltransferase family. As to quaternary structure, monomer. In terms of tissue distribution, expressed in petals. Not detected in sepals, stems, leaves, tubular corollas and white petals.

The protein localises to the cytoplasm. The catalysed reaction is cyanidin 3-O-beta-D-glucoside + UDP-alpha-D-glucuronate = cyanidin 3-O-(2-O-beta-D-glucuronosyl)-beta-D-glucoside + UDP + H(+). Its activity is regulated as follows. Inhibited by copper, mercury, UDP, UTP and partially by calcium, cadmium, iron and UMP. Not affected by cobalt, magnesium, manganese, zinc, nickel, tin, uridine, sadium malonate and glucose. Its function is as follows. Involved in the production of glucuronosylated anthocyanins that are the origin of the red coloration of flowers. Can use cyanidin 3-O-6''-O-malonylglucoside, cyanidin 3-O-glucoside and delphinidin 3-O-glucosideas substrates, but not pelargonidin 3-O-glucoside, cyanidin 3-O-3'',6''-O-dimalonylglucoside, pelargonidin 3,5-O-diglucoside, pelargonidin 3-O-6''-O-malonylglucoside-5-O-glucoside, quercetin 3-O-glucoside, quercetin 3-O-6''-O-malonylglucoside, daidzin, genistin,7-O-6''-O-malonylglucosides of daidzein and genistein, cyanidin, quercetin, daidzein, genistein p-Nitrophenyl beta-D-glucopyranoside, beta-estradiol, 17alpha-estradiol, 1-naphthol, 2-naphthol, 4-methylumbelliferone, and p-nitrophenol. Highly specific for UDP-glucuronate (UDP-GlcUA). Arg-25 is decisive with respect to UDP-sugar specificity. The chain is Cyanidin-3-O-glucoside 2-O-glucuronosyltransferase (UGAT) from Bellis perennis (English daisy).